A 138-amino-acid chain; its full sequence is MLQPKRRKYRKEQKGRNTGKATRGNAVSFGEFGLKAMGRGRLTARQIESARRAMTRHIKRGGRIWIRIFPDKPISKKPAEVRMGNGKGNPEYYVAEIQPGKMLYEMDGVSEDLAREAFRLAAAKLPIATNFVVRQVGT.

Residues 1 to 13 (MLQPKRRKYRKEQ) show a composition bias toward basic residues. The disordered stretch occupies residues 1 to 24 (MLQPKRRKYRKEQKGRNTGKATRG).

The protein belongs to the universal ribosomal protein uL16 family. Part of the 50S ribosomal subunit.

Functionally, binds 23S rRNA and is also seen to make contacts with the A and possibly P site tRNAs. In Cupriavidus necator (strain ATCC 17699 / DSM 428 / KCTC 22496 / NCIMB 10442 / H16 / Stanier 337) (Ralstonia eutropha), this protein is Large ribosomal subunit protein uL16.